The following is a 337-amino-acid chain: Ribosomal RNA small subunit methyltransferase H (337 aa).

S-adenosyl-L-methionine contacts are provided by residues 36–38 (GGH), aspartate 56, phenylalanine 82, aspartate 100, and glutamine 107. The tract at residues 317-337 (RRSGRIPNPQSPIPASQGDAR) is disordered.

It belongs to the methyltransferase superfamily. RsmH family.

The protein resides in the cytoplasm. It carries out the reaction cytidine(1402) in 16S rRNA + S-adenosyl-L-methionine = N(4)-methylcytidine(1402) in 16S rRNA + S-adenosyl-L-homocysteine + H(+). Specifically methylates the N4 position of cytidine in position 1402 (C1402) of 16S rRNA. This chain is Ribosomal RNA small subunit methyltransferase H, found in Xanthomonas oryzae pv. oryzae (strain KACC10331 / KXO85).